Here is a 466-residue protein sequence, read N- to C-terminus: FBD-associated F-box protein At5g22730 (466 aa).

Positions 27 to 80 (EDLISKLPDSLITQILLYLPIKDIVRTSSLSSRWKSLWLLIPRLDLDSEEFQDY) constitute an F-box domain. An FBD domain is found at 385 to 436 (DEPIIFSSVPRCLVSSLESVEIKKFNGRPAKMEVARYFLENSGVLQKLVLHL).

This is FBD-associated F-box protein At5g22730 from Arabidopsis thaliana (Mouse-ear cress).